Here is a 364-residue protein sequence, read N- to C-terminus: UDP-N-acetylglucosamine--N-acetylmuramyl-(pentapeptide) pyrophosphoryl-undecaprenol N-acetylglucosamine transferase (364 aa).

Residues 15 to 17 (TGG), asparagine 123, arginine 164, serine 191, and glutamine 286 each bind UDP-N-acetyl-alpha-D-glucosamine.

This sequence belongs to the glycosyltransferase 28 family. MurG subfamily.

The protein localises to the cell inner membrane. The catalysed reaction is di-trans,octa-cis-undecaprenyl diphospho-N-acetyl-alpha-D-muramoyl-L-alanyl-D-glutamyl-meso-2,6-diaminopimeloyl-D-alanyl-D-alanine + UDP-N-acetyl-alpha-D-glucosamine = di-trans,octa-cis-undecaprenyl diphospho-[N-acetyl-alpha-D-glucosaminyl-(1-&gt;4)]-N-acetyl-alpha-D-muramoyl-L-alanyl-D-glutamyl-meso-2,6-diaminopimeloyl-D-alanyl-D-alanine + UDP + H(+). It participates in cell wall biogenesis; peptidoglycan biosynthesis. In terms of biological role, cell wall formation. Catalyzes the transfer of a GlcNAc subunit on undecaprenyl-pyrophosphoryl-MurNAc-pentapeptide (lipid intermediate I) to form undecaprenyl-pyrophosphoryl-MurNAc-(pentapeptide)GlcNAc (lipid intermediate II). This is UDP-N-acetylglucosamine--N-acetylmuramyl-(pentapeptide) pyrophosphoryl-undecaprenol N-acetylglucosamine transferase from Prochlorococcus marinus (strain MIT 9515).